The chain runs to 668 residues: DNA ligase (668 aa).

NAD(+)-binding positions include aspartate 32–aspartate 36, serine 81–leucine 82, and glutamate 111. Lysine 113 acts as the N6-AMP-lysine intermediate in catalysis. Residues arginine 134, glutamate 171, lysine 290, and lysine 314 each contribute to the NAD(+) site. Zn(2+) is bound by residues cysteine 408, cysteine 411, cysteine 426, and cysteine 432. A BRCT domain is found at glutamate 591 to serine 668.

It belongs to the NAD-dependent DNA ligase family. LigA subfamily. Requires Mg(2+) as cofactor. Mn(2+) serves as cofactor.

It carries out the reaction NAD(+) + (deoxyribonucleotide)n-3'-hydroxyl + 5'-phospho-(deoxyribonucleotide)m = (deoxyribonucleotide)n+m + AMP + beta-nicotinamide D-nucleotide.. Its function is as follows. DNA ligase that catalyzes the formation of phosphodiester linkages between 5'-phosphoryl and 3'-hydroxyl groups in double-stranded DNA using NAD as a coenzyme and as the energy source for the reaction. It is essential for DNA replication and repair of damaged DNA. The polypeptide is DNA ligase (Shewanella piezotolerans (strain WP3 / JCM 13877)).